Consider the following 505-residue polypeptide: ATP synthase subunit alpha, chloroplastic (505 aa).

ATP is bound at residue 170–177; sequence GDRQTGKT.

Belongs to the ATPase alpha/beta chains family. In terms of assembly, F-type ATPases have 2 components, CF(1) - the catalytic core - and CF(0) - the membrane proton channel. CF(1) has five subunits: alpha(3), beta(3), gamma(1), delta(1), epsilon(1). CF(0) has four main subunits: a, b, b' and c.

The protein localises to the plastid. It is found in the chloroplast thylakoid membrane. The catalysed reaction is ATP + H2O + 4 H(+)(in) = ADP + phosphate + 5 H(+)(out). Its function is as follows. Produces ATP from ADP in the presence of a proton gradient across the membrane. The alpha chain is a regulatory subunit. This chain is ATP synthase subunit alpha, chloroplastic, found in Oenothera parviflora (Small-flowered evening primrose).